Reading from the N-terminus, the 283-residue chain is Protein boule-like (283 aa).

Residues 1–25 (MQTDSLSPSPNPVSPVPLNNPTSAP) form a disordered region. Residues 33-110 (NRIFVGGIDF…KKLNIGPAIR (78 aa)) form the RRM domain. A DAZ domain is found at 160–184 (PSRSVCSSPVMVAQPIYQQPAYHYQ).

It belongs to the RRM DAZ family. Interacts with DAZ1 and DAZL.

It is found in the cytoplasm. Its function is as follows. Probable RNA-binding protein, which may be required during spermatogenesis. May act by binding to the 3'-UTR of mRNAs and regulating their translation. This Macaca fascicularis (Crab-eating macaque) protein is Protein boule-like (BOLL).